Here is a 608-residue protein sequence, read N- to C-terminus: Mitochondrial import receptor subunit TOM70 (608 aa).

At A2 the chain carries N-acetylalanine. At 2 to 38 the chain is on the mitochondrial intermembrane side; it reads AASKPVEAAVVAAAVPSSGSGVGGGGTAGPGTGGLPR. Residues 39 to 59 traverse the membrane as a helical segment; the sequence is WQLALAVGAPLLLGAGAIYLW. Over 60–608 the chain is Cytoplasmic; sequence SRQQRRREAR…KKYGLKPPTL (549 aa). The interval 67-107 is disordered; that stretch reads EARGRGDASGLKRNSERKTPEGRASPAPGSGHPEGPGAHLD. Position 71 is an omega-N-methylarginine (R71). Residues S91, S96, and S110 each carry the phosphoserine modification. 2 TPR repeats span residues 114–147 and 153–186; these read AQAAKNKGNKYFKAGKYEQAIQCYTEAISLCPTE and STFYQNRAAAFEQLQKWKEVAQDCTKAVELNPKY. K185 carries the post-translational modification N6-acetyllysine. A Glycyl lysine isopeptide (Lys-Gly) (interchain with G-Cter in SUMO2) cross-link involves residue K275. TPR repeat units follow at residues 294–327, 329–362, 367–400, 401–434, 440–475, 476–509, 511–544, and 545–578; these read ENSGYLKAKQYMEEENYDKIISECSKEIDAEGKY, AEALLLRATFYLLIGNANAAKPDLDKVISLKEAN, ANALIKRGSMYMQQQQPLLSTQDFNMAADIDPQN, ADVYHHRGQLKILLDQVEEAVADFDECIRLRPES, QKCFALYRQAYTGNNSSQIQAAMKGFEEVIKKFPRC, AEGYALYAQALTDQQQFGKADEMYDKCIDLEPDN, TTYVHKGLLQLQWKQDLDRGLELISKAIEIDNKC, and DFAYETMGTIEVQRGNMEKAIDMFNKAINLAKSE. S434 carries the phosphoserine modification.

It belongs to the Tom70 family. Forms part of the preprotein translocase complex of the outer mitochondrial membrane (TOM complex) which consists of at least 7 different proteins (TOMM5, TOMM6, TOMM7, TOMM20, TOMM22, TOMM40 and TOMM70). Interacts with CAPN8. Interacts with TRADD, TRAF6 and STING. Interacts with MAVS; the interaction is enhanced by Sendai virus infection. Interacts with HSPA8 and HSP90AA1; both interactions are required for preprotein mitochondrial import. The interaction with HSP90AA1 is direct and mediates the association of TOMM70 with IRF3 and TBK1. Upon mitochondrial depolarization, interacts with PINK1; the interaction is required for PINK1-TOM-TIM23 supercomplex formation which is critical for PINK1 stabilization at the outer mitochondrial membrane, kinase activation and downstream mitophagy. In terms of assembly, (Microbial infection) Interacts (via C-terminus) with SARS coronaviru/SARS-CoV and SARS coronavirus-2/SARS-CoV-2 virus protein ORF9b. As to quaternary structure, (Microbial infection) Interacts with parasite T.gondii RH strain MAF1b1; the interaction impairs TOMM70 import activity, enables the parasite to associate with the host mitochondria and facilitates the association of MAF1b1 with MIB complex component SAMM50, promoting the formation of SPOTs (structures positive for outer mitochondrial membrane (OMM)); the interaction is probably indirect.

It localises to the mitochondrion outer membrane. Acts as a receptor of the preprotein translocase complex of the outer mitochondrial membrane (TOM complex). Recognizes and mediates the translocation of mitochondrial preproteins from the cytosol into the mitochondria in a chaperone dependent manner. Mediates TBK1 and IRF3 activation induced by MAVS in response to Sendai virus infection and promotes host antiviral responses during virus infection. Upon Sendai virus infection, recruits HSP90AA1:IRF3:BAX in mitochondrion and the complex induces apoptosis. This Homo sapiens (Human) protein is Mitochondrial import receptor subunit TOM70.